We begin with the raw amino-acid sequence, 495 residues long: Glycerol kinase (495 aa).

Thr-11 is a binding site for ADP. ATP-binding residues include Thr-11, Thr-12, and Ser-13. Residue Thr-11 participates in sn-glycerol 3-phosphate binding. Residues Arg-81, Glu-82, Tyr-133, and Asp-242 each coordinate sn-glycerol 3-phosphate. 5 residues coordinate glycerol: Arg-81, Glu-82, Tyr-133, Asp-242, and Gln-243. 4 residues coordinate ADP: Thr-264, Gly-307, Gly-407, and Asn-411. Positions 264, 307, and 407 each coordinate ATP.

Belongs to the FGGY kinase family.

It catalyses the reaction glycerol + ATP = sn-glycerol 3-phosphate + ADP + H(+). It functions in the pathway polyol metabolism; glycerol degradation via glycerol kinase pathway; sn-glycerol 3-phosphate from glycerol: step 1/1. Inhibited by fructose 1,6-bisphosphate (FBP). Functionally, key enzyme in the regulation of glycerol uptake and metabolism. Catalyzes the phosphorylation of glycerol to yield sn-glycerol 3-phosphate. This is Glycerol kinase from Thermus brockianus.